The following is a 293-amino-acid chain: Probable porphobilinogen deaminase (293 aa).

Position 233 is an S-(dipyrrolylmethanemethyl)cysteine (cysteine 233).

Belongs to the HMBS family. It depends on dipyrromethane as a cofactor.

The catalysed reaction is 4 porphobilinogen + H2O = hydroxymethylbilane + 4 NH4(+). It functions in the pathway porphyrin-containing compound metabolism; protoporphyrin-IX biosynthesis; coproporphyrinogen-III from 5-aminolevulinate: step 2/4. Functionally, tetrapolymerization of the monopyrrole PBG into the hydroxymethylbilane pre-uroporphyrinogen in several discrete steps. The sequence is that of Probable porphobilinogen deaminase from Saccharolobus islandicus (strain Y.G.57.14 / Yellowstone #1) (Sulfolobus islandicus).